Consider the following 179-residue polypeptide: ATP synthase subunit delta (179 aa).

This sequence belongs to the ATPase delta chain family. In terms of assembly, F-type ATPases have 2 components, F(1) - the catalytic core - and F(0) - the membrane proton channel. F(1) has five subunits: alpha(3), beta(3), gamma(1), delta(1), epsilon(1). F(0) has three main subunits: a(1), b(2) and c(10-14). The alpha and beta chains form an alternating ring which encloses part of the gamma chain. F(1) is attached to F(0) by a central stalk formed by the gamma and epsilon chains, while a peripheral stalk is formed by the delta and b chains.

The protein localises to the cell inner membrane. Functionally, f(1)F(0) ATP synthase produces ATP from ADP in the presence of a proton or sodium gradient. F-type ATPases consist of two structural domains, F(1) containing the extramembraneous catalytic core and F(0) containing the membrane proton channel, linked together by a central stalk and a peripheral stalk. During catalysis, ATP synthesis in the catalytic domain of F(1) is coupled via a rotary mechanism of the central stalk subunits to proton translocation. This protein is part of the stalk that links CF(0) to CF(1). It either transmits conformational changes from CF(0) to CF(1) or is implicated in proton conduction. The polypeptide is ATP synthase subunit delta (Burkholderia pseudomallei (strain 1710b)).